Here is a 443-residue protein sequence, read N- to C-terminus: UDP-N-acetylmuramate--L-alanine ligase (443 aa).

110 to 116 (GAHGKTS) contributes to the ATP binding site.

This sequence belongs to the MurCDEF family.

It is found in the cytoplasm. The catalysed reaction is UDP-N-acetyl-alpha-D-muramate + L-alanine + ATP = UDP-N-acetyl-alpha-D-muramoyl-L-alanine + ADP + phosphate + H(+). It functions in the pathway cell wall biogenesis; peptidoglycan biosynthesis. Its function is as follows. Cell wall formation. This is UDP-N-acetylmuramate--L-alanine ligase from Streptococcus agalactiae serotype V (strain ATCC BAA-611 / 2603 V/R).